Here is a 293-residue protein sequence, read N- to C-terminus: Pyridoxal 5'-phosphate synthase subunit PdxS (293 aa).

Residue aspartate 25 coordinates D-ribose 5-phosphate. The Schiff-base intermediate with D-ribose 5-phosphate role is filled by lysine 82. Glycine 154 lines the D-ribose 5-phosphate pocket. Position 166 (arginine 166) interacts with D-glyceraldehyde 3-phosphate. D-ribose 5-phosphate is bound by residues glycine 215 and 236-237 (GS).

This sequence belongs to the PdxS/SNZ family. In terms of assembly, in the presence of PdxT, forms a dodecamer of heterodimers.

The enzyme catalyses aldehydo-D-ribose 5-phosphate + D-glyceraldehyde 3-phosphate + L-glutamine = pyridoxal 5'-phosphate + L-glutamate + phosphate + 3 H2O + H(+). It functions in the pathway cofactor biosynthesis; pyridoxal 5'-phosphate biosynthesis. Its function is as follows. Catalyzes the formation of pyridoxal 5'-phosphate from ribose 5-phosphate (RBP), glyceraldehyde 3-phosphate (G3P) and ammonia. The ammonia is provided by the PdxT subunit. Can also use ribulose 5-phosphate and dihydroxyacetone phosphate as substrates, resulting from enzyme-catalyzed isomerization of RBP and G3P, respectively. In Thermotoga petrophila (strain ATCC BAA-488 / DSM 13995 / JCM 10881 / RKU-1), this protein is Pyridoxal 5'-phosphate synthase subunit PdxS.